We begin with the raw amino-acid sequence, 200 residues long: Arylesterase (200 aa).

A signal peptide spans Met-1 to Ala-19. The active-site Nucleophile is Ser-29. Active-site residues include Asp-176 and His-179.

This sequence belongs to the 'GDSL' lipolytic enzyme family. Homodimer.

It catalyses the reaction a phenyl acetate + H2O = a phenol + acetate + H(+). Functionally, favors the hydrolysis of several arylesters. This Vibrio mimicus protein is Arylesterase.